The chain runs to 122 residues: Large ribosomal subunit protein uL14 (122 aa).

It belongs to the universal ribosomal protein uL14 family. Part of the 50S ribosomal subunit. Forms a cluster with proteins L3 and L19. In the 70S ribosome, L14 and L19 interact and together make contacts with the 16S rRNA in bridges B5 and B8.

Binds to 23S rRNA. Forms part of two intersubunit bridges in the 70S ribosome. The sequence is that of Large ribosomal subunit protein uL14 from Natranaerobius thermophilus (strain ATCC BAA-1301 / DSM 18059 / JW/NM-WN-LF).